The sequence spans 186 residues: Calcium-binding protein NCSA (186 aa).

EF-hand domains lie at 40–58 (SGTI…MGVG), 66–93 (LFNV…ITRG), 94–129 (TPEE…MYKL), and 142–177 (DPHD…NPDI). Asp-107, Asp-109, Asn-111, Tyr-113, Glu-118, Asp-155, Asp-157, Asp-159, Tyr-161, and Glu-166 together coordinate Ca(2+).

The protein belongs to the recoverin family.

May prevent cells from entering development prematurely in the presence of environmental nutrients. The polypeptide is Calcium-binding protein NCSA (ncsA) (Dictyostelium discoideum (Social amoeba)).